A 503-amino-acid polypeptide reads, in one-letter code: Aspartyl/glutamyl-tRNA(Asn/Gln) amidotransferase subunit B (503 aa).

It belongs to the GatB/GatE family. GatB subfamily. In terms of assembly, heterotrimer of A, B and C subunits.

It carries out the reaction L-glutamyl-tRNA(Gln) + L-glutamine + ATP + H2O = L-glutaminyl-tRNA(Gln) + L-glutamate + ADP + phosphate + H(+). The catalysed reaction is L-aspartyl-tRNA(Asn) + L-glutamine + ATP + H2O = L-asparaginyl-tRNA(Asn) + L-glutamate + ADP + phosphate + 2 H(+). In terms of biological role, allows the formation of correctly charged Asn-tRNA(Asn) or Gln-tRNA(Gln) through the transamidation of misacylated Asp-tRNA(Asn) or Glu-tRNA(Gln) in organisms which lack either or both of asparaginyl-tRNA or glutaminyl-tRNA synthetases. The reaction takes place in the presence of glutamine and ATP through an activated phospho-Asp-tRNA(Asn) or phospho-Glu-tRNA(Gln). This Cereibacter sphaeroides (strain ATCC 17025 / ATH 2.4.3) (Rhodobacter sphaeroides) protein is Aspartyl/glutamyl-tRNA(Asn/Gln) amidotransferase subunit B.